The sequence spans 415 residues: All trans-polyprenyl-diphosphate synthase PDSS1 (415 aa).

Residues Pro16 to Ser35 form a disordered region. Positions 134, 137, and 173 each coordinate isopentenyl diphosphate. Asp180 and Asp184 together coordinate Mg(2+). Arg190 contacts isopentenyl diphosphate.

It belongs to the FPP/GGPP synthase family. In terms of assembly, heterotetramer composed of 2 PDSS1/DPS1 and 2 PDSS2/DLP1 subunits. Requires Mg(2+) as cofactor.

It localises to the mitochondrion. It carries out the reaction 7 isopentenyl diphosphate + (2E,6E)-farnesyl diphosphate = all-trans-decaprenyl diphosphate + 7 diphosphate. The catalysed reaction is 6 isopentenyl diphosphate + (2E,6E)-farnesyl diphosphate = all-trans-nonaprenyl diphosphate + 6 diphosphate. It participates in cofactor biosynthesis; ubiquinone biosynthesis. Heterotetrameric enzyme that catalyzes the condensation of farnesyl diphosphate (FPP), which acts as a primer, and isopentenyl diphosphate (IPP) to produce prenyl diphosphates of varying chain lengths and participates in the determination of the side chain of ubiquinone. Supplies nona and decaprenyl diphosphate, the precursors for the side chain of the isoprenoid quinones ubiquinone-9 (Q9)and ubiquinone-10 (Q10) respectively. The enzyme adds isopentenyl diphosphate molecules sequentially to farnesyl diphosphate with trans stereochemistry. The polypeptide is All trans-polyprenyl-diphosphate synthase PDSS1 (Homo sapiens (Human)).